A 394-amino-acid chain; its full sequence is Quinolinate synthase (394 aa).

Iminosuccinate contacts are provided by H57 and S74. C121 contacts [4Fe-4S] cluster. Residues 153–155 (YMN) and S174 each bind iminosuccinate. C243 lines the [4Fe-4S] cluster pocket. Iminosuccinate-binding positions include 269-271 (HPE) and T286. C333 provides a ligand contact to [4Fe-4S] cluster.

Belongs to the quinolinate synthase family. Type 3 subfamily. [4Fe-4S] cluster serves as cofactor.

The protein resides in the cytoplasm. The catalysed reaction is iminosuccinate + dihydroxyacetone phosphate = quinolinate + phosphate + 2 H2O + H(+). It participates in cofactor biosynthesis; NAD(+) biosynthesis; quinolinate from iminoaspartate: step 1/1. Functionally, catalyzes the condensation of iminoaspartate with dihydroxyacetone phosphate to form quinolinate. The polypeptide is Quinolinate synthase (Corynebacterium glutamicum (strain ATCC 13032 / DSM 20300 / JCM 1318 / BCRC 11384 / CCUG 27702 / LMG 3730 / NBRC 12168 / NCIMB 10025 / NRRL B-2784 / 534)).